Reading from the N-terminus, the 503-residue chain is Efflux pump vrtL (503 aa).

The tract at residues 1–59 (MSKLSDNHSSASEGEKEAGDLESGPTAISSEPSFDDADRDPNLITWDGPKDPENPKNWP) is disordered. An N-linked (GlcNAc...) asparagine glycan is attached at Asn-7. 12 consecutive transmembrane segments (helical) span residues 68 to 88 (WTVSLFVFISPVSSSMIAPAM), 101 to 121 (IEIYLSLSIFILAYSIGPIFF), 133 to 153 (LLQISNVWYLAWNLGCGFATT), 162 to 182 (FLAGIGGSAPLAIGGGAISDM), 194 to 214 (VYTLGPLLGPVVGPIAGGFIA), 221 to 241 (WVFWSTSAAALAVQVVGFFWL), 295 to 315 (IVFCMAIYMAYLFGISYLMFA), 329 to 349 (PGIGGLNYLSIAIGSFIGLFF), 377 to 397 (SLAVGSVISTIGLFWYGWSIG), 401 to 421 (WIMPNIGALIFAMGTISCLQG), 432 to 454 (TYAASAMAACAVLRSLCGFGFPL), and 471 to 491 (LLAFITMVVGWGAPFAFWHFG).

It belongs to the major facilitator superfamily.

It is found in the membrane. Functionally, efflux pump; part of the gene cluster that mediates the biosynthesis of viridicatumtoxin, a tetracycline-like fungal meroterpenoid with a unique, fused spirobicyclic ring system. In Penicillium aethiopicum, this protein is Efflux pump vrtL.